A 156-amino-acid polypeptide reads, in one-letter code: Ribosomal RNA large subunit methyltransferase H (156 aa).

S-adenosyl-L-methionine contacts are provided by residues Leu-73, Gly-104, and Val-123–Leu-128.

Belongs to the RNA methyltransferase RlmH family. Homodimer.

The protein resides in the cytoplasm. The enzyme catalyses pseudouridine(1915) in 23S rRNA + S-adenosyl-L-methionine = N(3)-methylpseudouridine(1915) in 23S rRNA + S-adenosyl-L-homocysteine + H(+). Functionally, specifically methylates the pseudouridine at position 1915 (m3Psi1915) in 23S rRNA. The protein is Ribosomal RNA large subunit methyltransferase H of Paraburkholderia phymatum (strain DSM 17167 / CIP 108236 / LMG 21445 / STM815) (Burkholderia phymatum).